The primary structure comprises 215 residues: Large ribosomal subunit protein uL3 (215 aa).

Positions 136 to 155 are disordered; sequence GVSISHRSHGSTGQRQDPGK. Position 151 is an N5-methylglutamine (Gln-151).

This sequence belongs to the universal ribosomal protein uL3 family. In terms of assembly, part of the 50S ribosomal subunit. Forms a cluster with proteins L14 and L19. Methylated by PrmB.

In terms of biological role, one of the primary rRNA binding proteins, it binds directly near the 3'-end of the 23S rRNA, where it nucleates assembly of the 50S subunit. This Rickettsia typhi (strain ATCC VR-144 / Wilmington) protein is Large ribosomal subunit protein uL3.